Here is a 75-residue protein sequence, read N- to C-terminus: MALFDDVKEVVVEQLNVSPDEVKEDSKFVEDLGADSLDVVELVMALEEKFDIEIPDDQAEAIATVGDAIKFIENV.

Residues 1–75 (MALFDDVKEV…GDAIKFIENV (75 aa)) form the Carrier domain. At Ser-36 the chain carries O-(pantetheine 4'-phosphoryl)serine.

It belongs to the acyl carrier protein (ACP) family. In terms of processing, 4'-phosphopantetheine is transferred from CoA to a specific serine of apo-ACP by AcpS. This modification is essential for activity because fatty acids are bound in thioester linkage to the sulfhydryl of the prosthetic group.

It localises to the cytoplasm. Its pathway is lipid metabolism; fatty acid biosynthesis. Functionally, carrier of the growing fatty acid chain in fatty acid biosynthesis. The polypeptide is Acyl carrier protein (Sulfurovum sp. (strain NBC37-1)).